The chain runs to 433 residues: Steroid hormone receptor ERR2 (433 aa).

Residues 1–38 (MSSDDRHLGSSCGSFIKTEPSSPSSGIDALSHHSPSGS) are disordered. The span at 28–38 (DALSHHSPSGS) shows a compositional bias: low complexity. The segment at 93–211 (YMLNAIPKRL…SPPAKKPLTK (119 aa)) is interaction with NANOG. The nuclear receptor DNA-binding region spans 100–186 (KRLCLVCGDI…RVRGGRQKYK (87 aa)). 2 NR C4-type zinc fingers span residues 103–123 (CLVC…CEAC) and 139–163 (CPAT…FMKC). An essential for ESRRB transcriptional activity and interaction with NCOA3 region spans residues 203 to 433 (PPAKKPLTKI…LFLEMLEAKV (231 aa)). Positions 208 to 432 (PLTKIVSYLL…KLFLEMLEAK (225 aa)) constitute an NR LBD domain.

Belongs to the nuclear hormone receptor family. NR3 subfamily. In terms of assembly, binds DNA as a monomer. Interacts with NR0B1; represses ESRRB activity at the GATA6 promoter. Interacts with NANOG; reciprocally modulates their transcriptional activities and activates POU5F1 expression. Interacts with NCOA3; mediates the interaction between ESRRB and RNA polymerase II complexes and allows NCOA3 corecruitment to ESRRB, KLF4, NANOG, and SOX2 enhancer regions to trigger ESRRB-dependent gene activation involved in self-renewal and pluripotency. Interacts with KDM1A; co-occupes the core set of ESRRB targets including ELF5 and EOMES. Interacts with the multiprotein complex Integrator, at least composed of INTS1, INTS2, INTS3, INTS4, INTS5, INTS6, INTS7, INTS8, INTS9/RC74, INTS10, INTS11/CPSF3L and INTS12; ESRRB is probably not a core component of the integrator complex and associates to integrator via its interaction with INTS1 and INTS9; attracts the transcriptional machinery. Interacts with JARID2. Interacts with POU5F1; recruits ESRRB near the POU5F1-SOX2 element in the NANOG proximal promoter leading to activation of NANOG expression; the interaction is DNA independent. Interacts with NFE2L2; represses NFE2L2 transcriptional activity. Isoform 1 interacts with ESR1. In terms of processing, acetylated by PCAF/KAT2 (in vitro).

The protein localises to the nucleus. It is found in the cytoplasm. The protein resides in the chromosome. Its function is as follows. Transcription factor that binds a canonical ESRRB recognition (ERRE) sequence 5'TCAAGGTCA-3' localized on promoter and enhancer of targets genes regulating their expression or their transcription activity. Plays a role, in a LIF-independent manner, in maintainance of self-renewal and pluripotency of embryonic and trophoblast stem cells through different signaling pathways including FGF signaling pathway and Wnt signaling pathways. Involved in morula development (2-16 cells embryos) by acting as a regulator at the 8-cell stage. Upon FGF signaling pathway activation, interacts with KDM1A by directly binding to enhancer site of ELF5 and EOMES and activating their transcription leading to self-renewal of trophoblast stem cells. Also regulates expression of multiple rod-specific genes and is required for survival of this cell type. Plays a role as transcription factor activator of GATA6, NR0B1, POU5F1 and PERM1. Plays a role as transcription factor repressor of NFE2L2 transcriptional activity and ESR1 transcriptional activity. During mitosis remains bound to a subset of interphase target genes, including pluripotency regulators, through the canonical ESRRB recognition (ERRE) sequence, leading to their transcriptional activation in early G1 phase. Can coassemble on structured DNA elements with other transcription factors like SOX2, POU5F1, KDM1A and NCOA3 to trigger ESRRB-dependent gene activation. This mechanism, in the case of SOX2 corecruitment prevents the embryonic stem cells (ESCs) to epiblast stem cells (EpiSC) transition through positive regulation of NR0B1 that inhibits the EpiSC transcriptional program. Also plays a role inner ear development by controlling expression of ion channels and transporters and in early placentation. In terms of biological role, transcription factor that binds a canonical ESRRB recognition (ERRE) sequence 5'TCAAGGTCA-3' localized on promoter and enhancer of targets genes regulating their expression or their transcription activity. Positively regulates ESR1 transcriptional activity upon E2 stimulation. In Homo sapiens (Human), this protein is Steroid hormone receptor ERR2.